The following is a 123-amino-acid chain: MDLREVALVLIGGGTGAVARYYLSGVLPVYRSFPVGTLLVNSLASFLLGYLYGLIFWGLDVSRESRLFLGTGFCGGLSTFSTFSYETFSLIREGEYLTALLNIFANVLATIFLVFLGFVLARR.

The next 4 helical transmembrane spans lie at 6–26, 38–58, 68–88, and 100–120; these read VALV…LSGV, LLVN…IFWG, FLGT…YETF, and LLNI…GFVL. The Na(+) site is built by Gly-75 and Ser-78.

It belongs to the fluoride channel Fluc/FEX (TC 1.A.43) family.

It is found in the cell membrane. The catalysed reaction is fluoride(in) = fluoride(out). Na(+) is not transported, but it plays an essential structural role and its presence is essential for fluoride channel function. Its function is as follows. Fluoride-specific ion channel. Important for reducing fluoride concentration in the cell, thus reducing its toxicity. This chain is Fluoride-specific ion channel FluC, found in Pyrococcus furiosus (strain ATCC 43587 / DSM 3638 / JCM 8422 / Vc1).